Reading from the N-terminus, the 104-residue chain is N(4)-acetylcytidine amidohydrolase (104 aa).

An ASCH domain is found at 6–101 (TFFERFEHDI…EQLYMIRFKV (96 aa)). Residue K20 is the Proton acceptor of the active site. T23 (nucleophile) is an active-site residue. E73 functions as the Proton donor in the catalytic mechanism.

The protein belongs to the N(4)-acetylcytidine amidohydrolase family.

It catalyses the reaction N(4)-acetylcytidine + H2O = cytidine + acetate + H(+). It carries out the reaction N(4)-acetyl-2'-deoxycytidine + H2O = 2'-deoxycytidine + acetate + H(+). The enzyme catalyses N(4)-acetylcytosine + H2O = cytosine + acetate + H(+). Functionally, catalyzes the hydrolysis of N(4)-acetylcytidine (ac4C). The protein is N(4)-acetylcytidine amidohydrolase of Shewanella oneidensis (strain ATCC 700550 / JCM 31522 / CIP 106686 / LMG 19005 / NCIMB 14063 / MR-1).